A 660-amino-acid chain; its full sequence is Pseudouridylate synthase 7 homolog (660 aa).

Residues 1–99 are disordered; it reads MEMTSTSLKR…EAGEEEEAES (99 aa). At serine 7 the chain carries Phosphoserine. The span at 22 to 32 shows a compositional bias: basic and acidic residues; that stretch reads TPHDETKKQKV. Positions 76–99 are enriched in acidic residues; the sequence is QEEEEEEEEEDGLSEAGEEEEAES. Serine 126 bears the Phosphoserine mark. Residue aspartate 293 is the Nucleophile of the active site. In terms of domain architecture, TRUD spans 369–579; it reads GFINYYGMQR…SGAYRRIIIR (211 aa).

Belongs to the pseudouridine synthase TruD family. In terms of assembly, interacts with SIRT1.

The protein resides in the nucleus. It carries out the reaction a uridine in tRNA = a pseudouridine in tRNA. The catalysed reaction is uridine(13) in tRNA = pseudouridine(13) in tRNA. The enzyme catalyses a uridine in mRNA = a pseudouridine in mRNA. Functionally, pseudouridylate synthase that catalyzes pseudouridylation of RNAs. Acts as a regulator of protein synthesis in embryonic stem cells by mediating pseudouridylation of RNA fragments derived from tRNAs (tRFs): pseudouridylated tRFs inhibit translation by targeting the translation initiation complex. Also catalyzes pseudouridylation of mRNAs: mediates pseudouridylation of mRNAs with the consensus sequence 5'-UGUAG-3'. Acts as a regulator of pre-mRNA splicing by mediating pseudouridylation of pre-mRNAs at locations associated with alternatively spliced regions. Pseudouridylation of pre-mRNAs near splice sites directly regulates mRNA splicing and mRNA 3'-end processing. In addition to mRNAs and tRNAs, binds other types of RNAs, such as snRNAs, Y RNAs and vault RNAs, suggesting that it can catalyze pseudouridylation of many RNA types. The chain is Pseudouridylate synthase 7 homolog from Mus musculus (Mouse).